A 92-amino-acid polypeptide reads, in one-letter code: MPRSLKKGPFIDISLLKKVEKSVKINDKKPIKTWSRRSTIFPNMVGLTISIHNGRSHIPVFVTEEMVGHKLGEFSLTRTYRGHTADKKVKKR.

This sequence belongs to the universal ribosomal protein uS19 family.

Functionally, protein S19 forms a complex with S13 that binds strongly to the 16S ribosomal RNA. In Buchnera aphidicola subsp. Acyrthosiphon pisum (strain 5A), this protein is Small ribosomal subunit protein uS19.